The chain runs to 239 residues: Urease accessory protein UreE (239 aa).

The segment at 185–239 (VASPLDEPHGSGLHIHGIHSHGDGHSHSHDSHSHSHDSDHGHSHSHGDHDHDHKH) is disordered. Basic and acidic residues predominate over residues 204–239 (SHGDGHSHSHDSHSHSHDSDHGHSHSHGDHDHDHKH).

The protein belongs to the UreE family.

The protein localises to the cytoplasm. Its function is as follows. Involved in urease metallocenter assembly. Binds nickel. Probably functions as a nickel donor during metallocenter assembly. In Yersinia frederiksenii, this protein is Urease accessory protein UreE.